The sequence spans 147 residues: Ribonuclease H (147 aa).

Residues 5 to 141 (ARKQITLYSD…CDELARNEAE (137 aa)) form the RNase H type-1 domain. Mg(2+)-binding residues include aspartate 14, glutamate 52, aspartate 74, and aspartate 133.

Belongs to the RNase H family. In terms of assembly, monomer. Requires Mg(2+) as cofactor.

The protein resides in the cytoplasm. It carries out the reaction Endonucleolytic cleavage to 5'-phosphomonoester.. Endonuclease that specifically degrades the RNA of RNA-DNA hybrids. In Sulfurovum sp. (strain NBC37-1), this protein is Ribonuclease H.